Reading from the N-terminus, the 425-residue chain is Orexin/Hypocretin receptor type 1 (425 aa).

Topologically, residues 1–46 are extracellular; it reads MEPSATPGPQMGVPTGVGDPSLVPPDYEEEFLSYLWRDYLYPKQYE. The segment at 26 to 41 is required for response to orexin-A; sequence DYEEEFLSYLWRDYLY. A helical transmembrane segment spans residues 47–67; sequence WVLIAAYVAVFLVALVGNTLV. Residues 68-82 lie on the Cytoplasmic side of the membrane; the sequence is CLAVWRNHHMRTVTN. Residues 83-105 form a helical membrane-spanning segment; that stretch reads YFIVNLSLADVLVTAICLPASLL. Topologically, residues 106-119 are extracellular; sequence VDITESWLFGHALC. Cys-119 and Cys-202 are oxidised to a cystine. The helical transmembrane segment at 120 to 140 threads the bilayer; the sequence is KVIPYLQAVSVSVAVLTLSFI. Residues 141–160 lie on the Cytoplasmic side of the membrane; that stretch reads ALDRWYAIYHPLLFKSTARR. Residues 161-182 traverse the membrane as a helical segment; that stretch reads ARGSILGIWAVSPAVMVPQAAV. The Extracellular portion of the chain corresponds to 183–213; the sequence is MECSSVLPELANRTRLFSVCDERWADDLYPK. The helical transmembrane segment at 214–235 threads the bilayer; sequence IYHSCFFIVTYLAPLGLMAMAY. Residues 236–298 are Cytoplasmic-facing; sequence FQIFRKLWGR…QMRARRKTAK (63 aa). The chain crosses the membrane as a helical span at residues 299 to 321; sequence MLMVVLLVFALCYLPISVLNVLK. The Extracellular segment spans residues 322–336; that stretch reads RVFGMFRQTSDREAV. A helical membrane pass occupies residues 337-360; sequence YACFTFSHWLVYANSAANPIIYNF. Topologically, residues 361–425 are cytoplasmic; the sequence is LSGKFREQFK…VLTSVTTVLP (65 aa).

It belongs to the G-protein coupled receptor 1 family.

It is found in the cell membrane. Its function is as follows. Moderately selective excitatory receptor for orexin-A and, with a lower affinity, for orexin-B neuropeptide. Triggers an increase in cytoplasmic Ca(2+) levels in response to orexin-A binding. This Sus scrofa (Pig) protein is Orexin/Hypocretin receptor type 1.